The chain runs to 146 residues: Hemoglobin subunit beta (146 aa).

Valine 1 is modified (N-acetylvaline). Residues 2–146 (HLTGEEKSAV…VANALAHKYH (145 aa)) enclose the Globin domain. Threonine 12 carries the post-translational modification Phosphothreonine. Serine 44 is subject to Phosphoserine. Lysine 59 carries the N6-acetyllysine modification. Heme b is bound at residue histidine 63. Lysine 82 is modified (N6-acetyllysine). Histidine 92 provides a ligand contact to heme b. Cysteine 93 is modified (S-nitrosocysteine). The residue at position 144 (lysine 144) is an N6-acetyllysine.

Belongs to the globin family. In terms of assembly, heterotetramer of two alpha chains and two beta chains. In terms of tissue distribution, red blood cells.

Functionally, involved in oxygen transport from the lung to the various peripheral tissues. In Loris tardigradus (Slender loris), this protein is Hemoglobin subunit beta (HBB).